Reading from the N-terminus, the 283-residue chain is uncharacterized protein (283 aa).

An HTH araC/xylS-type domain is found at 172-270; sequence EAIRDYIDER…ERSPSEYRRQ (99 aa). DNA-binding regions (H-T-H motif) lie at residues 189 to 210 and 237 to 260; these read ESVA…QKTG and VKEV…RKNT.

This is an uncharacterized protein from Escherichia coli (strain K12).